A 610-amino-acid polypeptide reads, in one-letter code: UvrABC system protein C (610 aa).

The GIY-YIG domain occupies 13–91 (HLPGVYRMYD…IKENQPKYNV (79 aa)). A UVR domain is found at 201-236 (GQVVEHLVQKMENAAQELDFEAAARFRDQIQSVRAV).

It belongs to the UvrC family. In terms of assembly, interacts with UvrB in an incision complex.

It is found in the cytoplasm. Functionally, the UvrABC repair system catalyzes the recognition and processing of DNA lesions. UvrC both incises the 5' and 3' sides of the lesion. The N-terminal half is responsible for the 3' incision and the C-terminal half is responsible for the 5' incision. The sequence is that of UvrABC system protein C from Actinobacillus pleuropneumoniae serotype 5b (strain L20).